Reading from the N-terminus, the 457-residue chain is Peptidyl-prolyl cis-trans isomerase FKBP5 (457 aa).

At Met1 the chain carries N-acetylmethionine. Positions 1–26 are disordered; it reads MTTDEGAKNSRGNPAATVAEQGEDVT. Lys28 bears the N6-acetyllysine mark. PPIase FKBP-type domains follow at residues 50-138 and 165-251; these read GDRV…LDFK and GARV…KSFE. 3 TPR repeats span residues 268-301, 317-350, and 351-384; these read AAIV…LEME, LAAF…DSAN, and EKGL…NPQN. A disordered region spans residues 421–457; that stretch reads AKEEANKAMSKKTSEGVTNEKLTASHAVEEEKPEGHV. Ser445 carries the post-translational modification Phosphoserine. Residues 447–457 are compositionally biased toward basic and acidic residues; sequence AVEEEKPEGHV.

Part of a heteromultimeric cytoplasmic complex with HSP90AA1, HSPA1A/HSPA1B and steroid receptors. Upon ligand binding dissociates from the complex and FKBP4 takes its place. Interacts with functionally mature heterooligomeric progesterone receptor complexes along with HSP90 and TEBP. Interacts with NR3C1. Interacts with Akt/AKT1 and PHLPP1; enhancing dephosphorylation and subsequent activation of Akt/AKT1. Interacts with IFI44L; this interaction modulates the kinase activity of IKBKB and IKBKE. Interacts with IKBKB and IKBKE. In terms of processing, acetylation impairs ability to promote interaction between Akt/AKT1 and PHLPP1. Deacetylation by SIRT7 promotes interaction between Akt/AKT1 and PHLPP1, leading to suppress Akt/AKT1 activation. Ubiquitinated, leading to degradation in a proteasome-dependent manner. Deubiquitinated by USP49, leading to stabilization.

It localises to the cytoplasm. Its subcellular location is the nucleus. It catalyses the reaction [protein]-peptidylproline (omega=180) = [protein]-peptidylproline (omega=0). Inhibited by both FK506 and rapamycin. Immunophilin protein with PPIase and co-chaperone activities. Component of unligated steroid receptors heterocomplexes through interaction with heat-shock protein 90 (HSP90). Plays a role in the intracellular trafficking of heterooligomeric forms of steroid hormone receptors maintaining the complex into the cytoplasm when unliganded. Acts as a regulator of Akt/AKT1 activity by promoting the interaction between Akt/AKT1 and PHLPP1, thereby enhancing dephosphorylation and subsequent activation of Akt/AKT1. Interacts with IKBKE and IKBKB which facilitates IKK complex assembly leading to increased IKBKE and IKBKB kinase activity, NF-kappaB activation, and IFN production. This is Peptidyl-prolyl cis-trans isomerase FKBP5 (FKBP5) from Saimiri boliviensis boliviensis (Bolivian squirrel monkey).